A 378-amino-acid chain; its full sequence is Erythronate-4-phosphate dehydrogenase (378 aa).

Residues S45 and T66 each coordinate substrate. Residues D146 and T175 each coordinate NAD(+). R208 is an active-site residue. Residue D232 participates in NAD(+) binding. E237 is an active-site residue. H254 (proton donor) is an active-site residue. Residue G257 coordinates NAD(+). Y258 provides a ligand contact to substrate.

This sequence belongs to the D-isomer specific 2-hydroxyacid dehydrogenase family. PdxB subfamily. As to quaternary structure, homodimer.

Its subcellular location is the cytoplasm. The enzyme catalyses 4-phospho-D-erythronate + NAD(+) = (R)-3-hydroxy-2-oxo-4-phosphooxybutanoate + NADH + H(+). It functions in the pathway cofactor biosynthesis; pyridoxine 5'-phosphate biosynthesis; pyridoxine 5'-phosphate from D-erythrose 4-phosphate: step 2/5. Its function is as follows. Catalyzes the oxidation of erythronate-4-phosphate to 3-hydroxy-2-oxo-4-phosphonooxybutanoate. This Escherichia coli O139:H28 (strain E24377A / ETEC) protein is Erythronate-4-phosphate dehydrogenase.